A 263-amino-acid chain; its full sequence is Hydroxyethylthiazole kinase (263 aa).

Substrate is bound at residue Met-39. Positions 115 and 160 each coordinate ATP. Residue Gly-187 participates in substrate binding.

This sequence belongs to the Thz kinase family. Requires Mg(2+) as cofactor.

The catalysed reaction is 5-(2-hydroxyethyl)-4-methylthiazole + ATP = 4-methyl-5-(2-phosphooxyethyl)-thiazole + ADP + H(+). It functions in the pathway cofactor biosynthesis; thiamine diphosphate biosynthesis; 4-methyl-5-(2-phosphoethyl)-thiazole from 5-(2-hydroxyethyl)-4-methylthiazole: step 1/1. Its function is as follows. Catalyzes the phosphorylation of the hydroxyl group of 4-methyl-5-beta-hydroxyethylthiazole (THZ). In Staphylococcus aureus (strain JH9), this protein is Hydroxyethylthiazole kinase.